The sequence spans 608 residues: Chaperone protein HtpG (608 aa).

Residues 1 to 332 (MQFQTEVNQL…VEDLPLNVSR (332 aa)) are a; substrate-binding. Positions 333–536 (EILQENQILK…KNKPDFAMQQ (204 aa)) are b. Residues 537 to 608 (LLKQMGQEQN…LTKIINKAFS (72 aa)) form a c region.

The protein belongs to the heat shock protein 90 family. In terms of assembly, homodimer.

The protein localises to the cytoplasm. Molecular chaperone. Has ATPase activity. The protein is Chaperone protein HtpG of Campylobacter jejuni subsp. jejuni serotype O:6 (strain 81116 / NCTC 11828).